A 509-amino-acid chain; its full sequence is Lysine--tRNA ligase (509 aa).

2 residues coordinate Mg(2+): E418 and E425.

This sequence belongs to the class-II aminoacyl-tRNA synthetase family. Homodimer. Mg(2+) is required as a cofactor.

It is found in the cytoplasm. It carries out the reaction tRNA(Lys) + L-lysine + ATP = L-lysyl-tRNA(Lys) + AMP + diphosphate. This Acinetobacter baumannii (strain ATCC 17978 / DSM 105126 / CIP 53.77 / LMG 1025 / NCDC KC755 / 5377) protein is Lysine--tRNA ligase.